We begin with the raw amino-acid sequence, 378 residues long: SWI/SNF-related matrix-associated actin-dependent regulator of chromatin subfamily B member 1 (378 aa).

The segment at 1 to 106 is DNA-binding; that stretch reads MIMALSKTFG…DEKYKAVSIS (106 aa).

This sequence belongs to the SNF5 family. In terms of assembly, component of the multiprotein chromatin-remodeling complexes SWI/SNF. Component of neural progenitors-specific chromatin remodeling complex (npBAF complex) and the neuron-specific chromatin remodeling complex (nBAF complex). Component of the BAF (SWI/SNF) chromatin remodeling complex. Component of the SWI/SNF-B (PBAF) chromatin remodeling complex. Binds to double-stranded DNA.

The protein resides in the nucleus. Functionally, involved in chromatin-remodeling. Core component of the BAF (SWI/SNF) complex. This ATP-dependent chromatin-remodeling complex plays important roles in cell proliferation and differentiation, in cellular antiviral activities and inhibition of tumor formation. Belongs to the neural progenitors-specific chromatin remodeling complex (npBAF complex) and the neuron-specific chromatin remodeling complex (nBAF complex) and may play a role in neural development. This is SWI/SNF-related matrix-associated actin-dependent regulator of chromatin subfamily B member 1 (smarcb1) from Xenopus laevis (African clawed frog).